A 1464-amino-acid polypeptide reads, in one-letter code: Collagen alpha-1(III) chain (1464 aa).

The first 23 residues, 1-23, serve as a signal peptide directing secretion; sequence MMSFVQSGTWFLLTLLHPTLILA. Residues 24–154 constitute a propeptide, N-terminal propeptide; it reads QQSNVDELGC…CPTGGQNYSP (131 aa). The region spanning 31-90 is the VWFC domain; it reads LGCSHLGQSYESRDVWKPEPCQICVCDSGSVLCDDIICDEEPLDCPNPEIPFGECCAICP. The disordered stretch occupies residues 97–1195; the sequence is PVLPDGHGPQ…PGPPGAPGPC (1099 aa). Over residues 100–109 the composition is skewed to low complexity; sequence PDGHGPQGPK. Polar residues predominate over residues 147 to 156; that stretch reads TGGQNYSPQF. A nonhelical region (N-terminal) region spans residues 155 to 169; it reads QFDSYDVKSGVGGMG. Gly residues predominate over residues 164-173; the sequence is GVGGMGGYPG. The segment at 170-1195 is triple-helical region; sequence GYPGPAGPPG…PGPPGAPGPC (1026 aa). The segment covering 174–184 has biased composition (pro residues); it reads PAGPPGPPGPP. The span at 186–198 shows a compositional bias: low complexity; it reads SSGHPGSPGSPGY. The segment covering 228 to 240 has biased composition (basic and acidic residues); that stretch reads KDGESGRPGRPGE. K262 is modified (5-hydroxylysine; alternate). Residue K262 is glycosylated (O-linked (Gal...) hydroxylysine; alternate). The segment covering 265–276 has biased composition (basic and acidic residues); the sequence is RGFDGRNGEKGE. At K283 the chain carries 5-hydroxylysine. Composition is skewed to low complexity over residues 310-321 and 354-379; these read PGLPGAAGARGN and PAGS…AGAQ. A compositionally biased stretch (gly residues) spans 389-398; that stretch reads GSPGGKGEMG. Over residues 399–412 the composition is skewed to low complexity; that stretch reads PAGIPGAPGLIGAR. The span at 527–548 shows a compositional bias: gly residues; it reads GTPGGPGIRGMPGSPGGPGNDG. Residues 606–615 show a composition bias toward low complexity; that stretch reads PAGKNGETGP. Gly residues-rich tracts occupy residues 641–650 and 668–677; these read GIPGTGGPPG and GAPGGKGDSG. The segment covering 678–691 has biased composition (low complexity); sequence APGERGPPGTAGIP. The span at 692–708 shows a compositional bias: gly residues; that stretch reads GARGGAGPPGPEGGKGP. Residues 717 to 727 show a composition bias toward low complexity; that stretch reads ASGSPGLQGMP. Residues 822–834 show a composition bias toward basic and acidic residues; sequence AKGERGAPGEKGE. The residue at position 859 (K859) is a 5-hydroxylysine. Over residues 863-879 the composition is skewed to gly residues; that stretch reads GSPGGPGTAGFPGGRGL. The span at 889-906 shows a compositional bias: pro residues; sequence PGPPGPSGAPGKDGPPGP. Composition is skewed to low complexity over residues 907-934 and 945-960; these read AGNS…KGPP and PLGI…LAGP. At K976 the chain carries 5-hydroxylysine. The segment covering 1045 to 1054 has biased composition (pro residues); it reads PGHPGPPGPV. The segment covering 1068 to 1084 has biased composition (low complexity); sequence PAGPSGAPGPAGARGAP. A 5-hydroxylysine mark is found at K1093 and K1105. Positions 1120–1132 are enriched in low complexity; that stretch reads PGAAGHQGAIGSP. Residues 1180–1192 show a composition bias toward pro residues; the sequence is PGQPGPPGPPGAP. Positions 1220–1464 are cleaved as a propeptide — C-terminal propeptide; that stretch reads DDPMDFKINT…GVDIGPVCFL (245 aa). The 235-residue stretch at 1230–1464 folds into the Fibrillar collagen NC1 domain; the sequence is EEIMSSLKSV…GVDIGPVCFL (235 aa). Cystine bridges form between C1260–C1292, C1300–C1462, and C1370–C1415. Ca(2+) contacts are provided by D1278, N1280, Q1281, C1283, and D1286.

This sequence belongs to the fibrillar collagen family. As to quaternary structure, trimers of identical alpha 1(III) chains. The chains are linked to each other by interchain disulfide bonds. Trimers are also cross-linked via hydroxylysines. Interacts with ADGRG1. In terms of processing, proline residues at the third position of the tripeptide repeating unit (G-X-Y) are hydroxylated in some or all of the chains. O-linked glycan consists of a Glc-Gal disaccharide bound to the oxygen atom of a post-translationally added hydroxyl group. In terms of tissue distribution, expressed in embryonic brain, specifically in the meninges, pial basement membrane and blood vessels (at protein level).

The protein localises to the secreted. It localises to the extracellular space. The protein resides in the extracellular matrix. Collagen type III occurs in most soft connective tissues along with type I collagen. Involved in regulation of cortical development. Is the major ligand of ADGRG1 in the developing brain and binding to ADGRG1 inhibits neuronal migration and activates the RhoA pathway by coupling ADGRG1 to GNA13 and possibly GNA12. In Mus musculus (Mouse), this protein is Collagen alpha-1(III) chain (Col3a1).